A 330-amino-acid polypeptide reads, in one-letter code: tRNA U34 carboxymethyltransferase (330 aa).

Residues Lys91, Trp105, Lys110, Gly130, Asp152 to Ser154, Ile181 to Glu182, Met196, Tyr200, and Arg315 contribute to the carboxy-S-adenosyl-L-methionine site.

Belongs to the class I-like SAM-binding methyltransferase superfamily. CmoB family. In terms of assembly, homotetramer.

It catalyses the reaction carboxy-S-adenosyl-L-methionine + 5-hydroxyuridine(34) in tRNA = 5-carboxymethoxyuridine(34) in tRNA + S-adenosyl-L-homocysteine + H(+). Its function is as follows. Catalyzes carboxymethyl transfer from carboxy-S-adenosyl-L-methionine (Cx-SAM) to 5-hydroxyuridine (ho5U) to form 5-carboxymethoxyuridine (cmo5U) at position 34 in tRNAs. The sequence is that of tRNA U34 carboxymethyltransferase from Shewanella piezotolerans (strain WP3 / JCM 13877).